We begin with the raw amino-acid sequence, 871 residues long: Zinc finger protein 473 (871 aa).

The 70-residue stretch at 6 to 75 (VTLKDVGMDF…AGGSPEATSP (70 aa)) folds into the KRAB domain. Disordered regions lie at residues 47–81 (PPRP…TETK) and 140–164 (NGES…TVST). Over residues 71–81 (EATSPDVTETK) the composition is skewed to polar residues. Over residues 145–154 (TECKSHELKR) the composition is skewed to basic and acidic residues. Lys148 is covalently cross-linked (Glycyl lysine isopeptide (Lys-Gly) (interchain with G-Cter in SUMO2)). The C2H2-type 1 zinc-finger motif lies at 209 to 231 (YQCSECGKSFSGSYRLTQHWITH). The C2H2-type 2; degenerate zinc-finger motif lies at 265-286 (YVCNEYGTTFSQSTYLWHQKTH). Positions 290–317 (KPCKSQDSDHPPSHDTQPGEHQKTHTDS) are enriched in basic and acidic residues. Residues 290–318 (KPCKSQDSDHPPSHDTQPGEHQKTHTDSK) form a disordered region. The interaction with SLBP/pre-mRNA complex stretch occupies residues 312 to 552 (KTHTDSKSYN…GFFVSGKILD (241 aa)). 3 C2H2-type zinc fingers span residues 320-342 (YNCN…QKIH), 347-369 (YECS…QKTH), and 375-397 (SECQ…QALH). A C2H2-type 6; degenerate zinc finger spans residues 403–425 (YKCNERGKSFRHNSTLKIHQRVH). Lys419 is covalently cross-linked (Glycyl lysine isopeptide (Lys-Gly) (interchain with G-Cter in SUMO2)). 4 consecutive C2H2-type zinc fingers follow at residues 431–453 (YKCS…RRIH), 459–481 (HKCQ…QAIH), 487–509 (YSCA…QKMH), and 515–537 (YECQ…ESVH). Residues Lys549 and Lys558 each participate in a glycyl lysine isopeptide (Lys-Gly) (interchain with G-Cter in SUMO2) cross-link. C2H2-type zinc fingers lie at residues 562–584 (FKCN…ERIH) and 591–613 (FECD…QRIH). Lys635 is covalently cross-linked (Glycyl lysine isopeptide (Lys-Gly) (interchain with G-Cter in SUMO2)). 8 C2H2-type zinc fingers span residues 646–668 (FKCN…QLIH), 674–696 (FKCS…ERTH), 702–724 (LVCN…QRIH), 730–752 (YVCD…QRIH), 758–780 (YVCQ…RRVH), 786–808 (YRCG…QRIH), 814–836 (YSCN…LRVH), and 842–864 (YQCQ…QRVH).

The protein belongs to the krueppel C2H2-type zinc-finger protein family. As to quaternary structure, interacts with the SLBP/pre-mRNA complex but not with SLBP alone. Interacts with LSM11 in a U7 snRNP-dependent manner.

Its subcellular location is the nucleus. In terms of biological role, involved in histone 3'-end pre-mRNA processing by associating with U7 snRNP and interacting with SLBP/pre-mRNA complex. Increases histone 3'-end pre-mRNA processing but has no effect on U7 snRNP levels, when overexpressed. Required for cell cycle progression from G1 to S phases. In Homo sapiens (Human), this protein is Zinc finger protein 473 (ZNF473).